The primary structure comprises 149 residues: Transcriptional repressor NrdR (149 aa).

A zinc finger spans residues 3-34 (CPFCFAVDTKVIDSRLVGEGSSVRRRRQCLVC). Residues 49-139 (PRVVKSNDVR…VYRSFEDIKE (91 aa)) form the ATP-cone domain.

This sequence belongs to the NrdR family. It depends on Zn(2+) as a cofactor.

In terms of biological role, negatively regulates transcription of bacterial ribonucleotide reductase nrd genes and operons by binding to NrdR-boxes. The chain is Transcriptional repressor NrdR from Klebsiella pneumoniae (strain 342).